A 306-amino-acid chain; its full sequence is 4-hydroxy-tetrahydrodipicolinate synthase (306 aa).

Residue threonine 46 participates in pyruvate binding. The active-site Proton donor/acceptor is the tyrosine 134. Lysine 162 acts as the Schiff-base intermediate with substrate in catalysis. Valine 204 is a pyruvate binding site.

It belongs to the DapA family. Homotetramer; dimer of dimers.

The protein localises to the cytoplasm. The enzyme catalyses L-aspartate 4-semialdehyde + pyruvate = (2S,4S)-4-hydroxy-2,3,4,5-tetrahydrodipicolinate + H2O + H(+). It functions in the pathway amino-acid biosynthesis; L-lysine biosynthesis via DAP pathway; (S)-tetrahydrodipicolinate from L-aspartate: step 3/4. Functionally, catalyzes the condensation of (S)-aspartate-beta-semialdehyde [(S)-ASA] and pyruvate to 4-hydroxy-tetrahydrodipicolinate (HTPA). The chain is 4-hydroxy-tetrahydrodipicolinate synthase from Synechococcus sp. (strain JA-2-3B'a(2-13)) (Cyanobacteria bacterium Yellowstone B-Prime).